The chain runs to 101 residues: Integration host factor subunit beta (101 aa).

The tract at residues 57–101 (PARAGRNPRTGAHVPVDQKSVPFFKTGKEMRERLNRDHPDPGAAD) is disordered. Positions 82–101 (TGKEMRERLNRDHPDPGAAD) are enriched in basic and acidic residues.

This sequence belongs to the bacterial histone-like protein family. In terms of assembly, heterodimer of an alpha and a beta chain.

Functionally, this protein is one of the two subunits of integration host factor, a specific DNA-binding protein that functions in genetic recombination as well as in transcriptional and translational control. The chain is Integration host factor subunit beta from Bradyrhizobium diazoefficiens (strain JCM 10833 / BCRC 13528 / IAM 13628 / NBRC 14792 / USDA 110).